The primary structure comprises 1280 residues: Dynactin subunit 1 (1280 aa).

The tract at residues 1–26 (MAQSKRHMYNRTPSGSRMSTEASARP) is disordered. Over residues 11–22 (RTPSGSRMSTEA) the composition is skewed to polar residues. Positions 48-90 (GATLFATGKWVGVILDEAKGKNDGTVQGRKYFTCDEGHGIFVR) constitute a CAP-Gly domain. Residues 99–223 (DGADTTSPET…SKEEEGLRDQ (125 aa)) form a disordered region. Residues 102 to 114 (DTTSPETPDSSAS) are compositionally biased toward polar residues. Residues threonine 108, threonine 145, threonine 146, and threonine 147 each carry the phosphothreonine modification. Positions 129–152 (SKLRGLKPKKAPTARKTTTRRPKP) are enriched in basic residues. The span at 161-205 (AGPSSSLGPSGSASAGELSSSEPSTPAQTPLAAPIIPTPALTSPG) shows a compositional bias: low complexity. Serine 179 carries the post-translational modification Phosphoserine; by PLK1. Serine 212 is subject to Phosphoserine; by CDK1. Basic and acidic residues predominate over residues 214–223 (SKEEEGLRDQ). 2 coiled-coil regions span residues 214–513 (SKEE…ADYQ) and 942–1048 (LKLE…EGLR). Positions 910-1280 (EYDAERPPSK…LHQLHGRLIS (371 aa)) are interaction with HPS6. The segment at 1064-1089 (GEEQQRGGTPGQAPGALPGPGPVKDS) is disordered. A coiled-coil region spans residues 1184–1213 (SAQLMEQVAQLKSLSDTIEKLKDEVLKETV).

This sequence belongs to the dynactin 150 kDa subunit family. As to quaternary structure, monomer and homodimer. Subunit of dynactin, a multiprotein complex part of a tripartite complex with dynein and a adapter, such as BICDL1, BICD2 or HOOK3. The dynactin complex is built around ACTR1A/ACTB filament and consists of an actin-related filament composed of a shoulder domain, a pointed end and a barbed end. Its length is defined by its flexible shoulder domain. The soulder is composed of 2 DCTN1 subunits, 4 DCTN2 and 2 DCTN3. DCTN1/p150(glued) binds directly to microtubules and to cytoplasmic dynein. The 4 DCNT2 (via N-terminus) bind the ACTR1A filament and act as molecular rulers to determine the length. The pointed end is important for binding dynein-dynactin cargo adapters. Consists of 4 subunits: ACTR10, DCNT4, DCTN5 and DCTN6. The barbed end is composed of a CAPZA1:CAPZB heterodimers, which binds ACTR1A/ACTB filament and dynactin and stabilizes dynactin. Interacts with the C-terminus of MAPRE1, MAPRE2 and MAPRE3. Interacts (via C-terminus) with SNX6. Interacts with CLN3, DYNAP, ECPAS and FBXL5. Interacts with MISP; this interaction regulates its distribution at the cell cortex. Interacts with CEP131. Interacts with CEP126. Interacts with CLIP1. Interacts with dynein intermediate chain and dynein heavy chain. Interacts with PLK1 (via POLO-box domain). Interacts with TBCB. Binds preferentially to tyrosinated microtubules than to detyrosinated microtubules. Interacts with PARD6A. Interacts with HPS6. Interacts with KIF3A. Interacts with BICD2. Interacts with DST (isoform 9). Interacts with DST (isoform 1). Identified in a complex with MREG and RILP. Interacts with BCCIP (isoform 2/alpha). Interacts with DCDC1. Interacts with AKNA. Interacts with DYNC1I2. Interacts with RUFY3 and RUFY4. Ubiquitinated by a SCF complex containing FBXL5, leading to its degradation by the proteasome. In terms of processing, phosphorylation by SLK at Thr-145, Thr-146 and Thr-147 targets DCTN1 to the centrosome. It is uncertain if SLK phosphorylates all three threonines or one or two of them. PLK1-mediated phosphorylation at Ser-179 is essential for its localization in the nuclear envelope and promotes its dissociation from microtubules during early mitosis and positively regulates nuclear envelope breakdown during prophase. Ubiquitous with a high level expression observed in the brain (at protein level).

It localises to the cytoplasm. The protein localises to the cytoskeleton. The protein resides in the microtubule organizing center. It is found in the centrosome. Its subcellular location is the centriole. It localises to the spindle. The protein localises to the nucleus envelope. The protein resides in the cell cortex. Part of the dynactin complex that activates the molecular motor dynein for ultra-processive transport along microtubules. Plays a key role in dynein-mediated retrograde transport of vesicles and organelles along microtubules by recruiting and tethering dynein to microtubules. Binds to both dynein and microtubules providing a link between specific cargos, microtubules and dynein. Essential for targeting dynein to microtubule plus ends, recruiting dynein to membranous cargos and enhancing dynein processivity (the ability to move along a microtubule for a long distance without falling off the track). Can also act as a brake to slow the dynein motor during motility along the microtubule. Can regulate microtubule stability by promoting microtubule formation, nucleation and polymerization and by inhibiting microtubule catastrophe in neurons. Inhibits microtubule catastrophe by binding both to microtubules and to tubulin, leading to enhanced microtubule stability along the axon. Plays a role in metaphase spindle orientation. Plays a role in centriole cohesion and subdistal appendage organization and function. Its recruitment to the centriole in a KIF3A-dependent manner is essential for the maintenance of centriole cohesion and the formation of subdistal appendage. Also required for microtubule anchoring at the mother centriole. Plays a role in primary cilia formation. The protein is Dynactin subunit 1 (Dctn1) of Rattus norvegicus (Rat).